Here is a 621-residue protein sequence, read N- to C-terminus: MFRMDSSGRRSRSRRSRGSSGAPNMFEGTTTSRSRQEQLLASLEQMRGSSGPSNTEGTTSRAADLVAPTMAPTAEAAVDAEAAVDAEAEEAAAELDDGEETSGADASTEEAATQAPPRRAIRYRRSLTLKPSKPFDQRRVIEPKGTRAWKEVSWDGTGHRTPILTELGICLRFAYPAMVTEGGQEIAAHYWAHWDLKPYGNDGTHTSKVWDLFWGQFRVCDPYTLDDSYVREVFNGSADRAVKGMMYKARLRAVTVYQKRQGNYCDANMAKEIHLTAQQYKESEVDWLSHHSDAWAWMCEYWASEEFLAISNRNRMNRLSKPGVHFFGADGHVGKAARMAARNGVEPTLLQVFVEGHKGPDPNHPEILNDSNATEKLARYIDNVREKNGPDTDWLTGEFDTEAAYKAGGGVPHGRLAIGDGVVPRRSYTRRSNFSAGSNRPRRPSAREGELLEKMTQMEESMAQYKQQVQQQMQQMQNWMLHQMYGGAGTQFGMPPFQQPPIITHPVSGQSSDRSTAAADGSQGSATSVQDQLMPLGVIGGQMMPWAPRQPGIWPPMQTQMPPPMPWGFPPRGQSQSPGLPSHSPGSGSGSHHASPPPDQSTFMDLLMNTSGGGSNDPPTE.

Disordered stretches follow at residues 1 to 119 (MFRM…PPRR), 428 to 447 (YTRR…PSAR), 498 to 530 (QQPP…TSVQ), and 549 to 621 (RQPG…PPTE). Polar residues-rich tracts occupy residues 27 to 39 (EGTT…QEQL) and 47 to 61 (RGSS…TTSR). The segment covering 82 to 102 (AAVDAEAEEAAAELDDGEETS) has biased composition (acidic residues). Low complexity predominate over residues 570 to 594 (PPRGQSQSPGLPSHSPGSGSGSHHA).

This protein has most probably three functions; the mutator (M) function, for excision and transposition; the suppressor (S) function, which inhibits residual gene activity of certain alleles in which inhibitor elements are integrated; an activator (A) function is proposed, because inactive SPM can be activated by a second SPM. In Zea mays (Maize), this protein is Autonomous transposable element EN-1 mosaic protein.